An 84-amino-acid chain; its full sequence is Delta-conotoxin-like MVIB (84 aa).

Positions 1 to 22 (MKLTCVMIVAVLFLTAWTFVTA) are cleaved as a signal peptide. The propeptide occupies 23 to 51 (DDSRYGLKDLFPKERHEMKNPEASKLNQR). 3 disulfides stabilise this stretch: Cys54-Cys69, Cys61-Cys73, and Cys68-Cys77. Pro65 bears the 4-hydroxyproline mark. Ser83 carries the serine amide modification.

Belongs to the conotoxin O1 superfamily. Expressed by the venom duct.

The protein resides in the secreted. Its function is as follows. Delta-conotoxins bind to site 6 of voltage-gated sodium channels (Nav) and inhibit the inactivation process. This is Delta-conotoxin-like MVIB from Conus magus (Magical cone).